We begin with the raw amino-acid sequence, 505 residues long: Sucrose porin (505 aa).

Residues 1-22 (MYKKRKLAILIALLTGTAAAHG) form the signal peptide. The segment at 44–94 (ETRASTAESRAASAEQKVQQLTQQQQQTQATTQQVARRTTQLEEKAERPGG) is disordered. The span at 46–82 (RASTAESRAASAEQKVQQLTQQQQQTQATTQQVARRT) shows a compositional bias: low complexity. Basic and acidic residues predominate over residues 83 to 93 (TQLEEKAERPG).

The protein belongs to the porin LamB (TC 1.B.3) family. In terms of assembly, homotrimer.

It is found in the cell outer membrane. Functionally, porin for sucrose uptake. This is Sucrose porin (scrY) from Klebsiella pneumoniae.